A 161-amino-acid polypeptide reads, in one-letter code: Urease accessory protein UreE (161 aa).

The protein belongs to the UreE family. In terms of assembly, homodimer.

The protein resides in the cytoplasm. Its function is as follows. Involved in urease metallocenter assembly. Binds nickel. Probably functions as a nickel donor during metallocenter assembly. It is not essential for urease activity. The chain is Urease accessory protein UreE from Proteus mirabilis (strain HI4320).